The following is a 363-amino-acid chain: Spermidine/putrescine import ATP-binding protein PotA (363 aa).

The ABC transporter domain occupies 6–236 (LEIRNVTRRF…PRSRFVADFI (231 aa)). 38-45 (GPSGCGKT) serves as a coordination point for ATP.

This sequence belongs to the ABC transporter superfamily. Spermidine/putrescine importer (TC 3.A.1.11.1) family. As to quaternary structure, the complex is composed of two ATP-binding proteins (PotA), two transmembrane proteins (PotB and PotC) and a solute-binding protein (PotD).

Its subcellular location is the cell inner membrane. The catalysed reaction is ATP + H2O + polyamine-[polyamine-binding protein]Side 1 = ADP + phosphate + polyamineSide 2 + [polyamine-binding protein]Side 1.. Its function is as follows. Part of the ABC transporter complex PotABCD involved in spermidine/putrescine import. Responsible for energy coupling to the transport system. This Pseudomonas aeruginosa (strain UCBPP-PA14) protein is Spermidine/putrescine import ATP-binding protein PotA.